The sequence spans 321 residues: Sphingolipid delta(4)-desaturase DES1 (321 aa).

6 helical membrane passes run 41–61 (PNFK…LFVV), 68–88 (WLIV…MLAV), 107–127 (ILGF…FKKY), 157–177 (FGKF…PLII), 187–206 (IINT…FLGW), and 208–230 (PLAY…GHFI).

It belongs to the fatty acid desaturase type 1 family. DEGS subfamily. Testes.

The protein localises to the endoplasmic reticulum membrane. The protein resides in the membrane. It is found in the mitochondrion. It catalyses the reaction an N-acylsphinganine + 2 Fe(II)-[cytochrome b5] + O2 + 2 H(+) = an N-acylsphing-4-enine + 2 Fe(III)-[cytochrome b5] + 2 H2O. The catalysed reaction is an N-acyleicosasphinganine + 2 Fe(II)-[cytochrome b5] + O2 + 2 H(+) = an N-acyleicosasphing-4-enine + 2 Fe(III)-[cytochrome b5] + 2 H2O. It functions in the pathway sphingolipid metabolism. Has sphingolipid-delta-4-desaturase activity. Converts sphinganine-containing sphingolipids (such as N-acylsphinganines or dihydroceramides) into sphingolipids containing the delta-4-desaturated sphingoid base (E)-sphing-4-enine (such as N-acylsphing-4-enines or ceramides), which are required for many different functions (structural functions as well as signaling). Required to initiate spermatid differentiation among other signals. Required for central spindle assembly and cytokinesis during male meiosis, may act as part of an anchoring mechanism that links membrane-bounded cellular compartments to components of the cytoskeleton. The protein is Sphingolipid delta(4)-desaturase DES1 of Drosophila melanogaster (Fruit fly).